We begin with the raw amino-acid sequence, 597 residues long: Alpha-1,2-mannosyltransferase MNN2 (597 aa).

The Cytoplasmic segment spans residues 1–12 (MLLTKRFSKLFK). The helical; Signal-anchor for type II membrane protein transmembrane segment at 13 to 28 (LTFIVLILCGLFVITN) threads the bilayer. The Extracellular segment spans residues 29–597 (KYMDENTSVK…STHDKAIAGK (569 aa)). Residues Asn34, Asn363, and Asn473 are each glycosylated (N-linked (GlcNAc...) asparagine).

This sequence belongs to the MNN1/MNT family. As to quaternary structure, interacts with SVP26.

Its subcellular location is the golgi apparatus membrane. Its pathway is protein modification; protein glycosylation. Functionally, alpha-1,2-mannosyltransferase, responsible for addition of the first alpha-1,2-linked mannose to form the branches on the mannan backbone of oligosaccharides. The polypeptide is Alpha-1,2-mannosyltransferase MNN2 (MNN2) (Saccharomyces cerevisiae (strain ATCC 204508 / S288c) (Baker's yeast)).